A 59-amino-acid chain; its full sequence is Small, acid-soluble spore protein H (59 aa).

Belongs to the SspH family.

The protein resides in the spore core. The sequence is that of Small, acid-soluble spore protein H from Bacillus licheniformis (strain ATCC 14580 / DSM 13 / JCM 2505 / CCUG 7422 / NBRC 12200 / NCIMB 9375 / NCTC 10341 / NRRL NRS-1264 / Gibson 46).